A 1588-amino-acid chain; its full sequence is Autotransporter adhesin EhaG (1588 aa).

A signal peptide spans 1-53; that stretch reads MNKIFKVIWNPATGNYTVTSETAKSRGKKSGRSKLLISALVAGGMLSSFGALA. The interval 54-1499 is surface exposed passenger domain; that stretch reads NAGNDNGQGV…QETKQYTDQR (1446 aa). The tract at residues 1500-1588 is translocator domain; that stretch reads MVEMDNKLSK…SAALGAGIQW (89 aa). 4 beta stranded membrane passes run 1534-1544, 1548-1558, 1567-1573, and 1577-1588; these read GASMASIGGGT, ESAVALGVSMV, KLQGSTN, and EYSAALGAGIQW.

Belongs to the autotransporter-2 (AT-2) (TC 1.B.40) family. In terms of assembly, homotrimer.

Its subcellular location is the cell surface. The protein resides in the cell outer membrane. Functionally, mediates aggregation, biofilm formation and adhesion to a range of extracellular matrix (ECM) proteins, such as fibronectin, fibrinogen, laminin and collagen types I, II, III, and V. Mediates adhesion to intestinal epithelial cells. This chain is Autotransporter adhesin EhaG, found in Escherichia coli O157:H7.